A 393-amino-acid polypeptide reads, in one-letter code: Cyclic GMP-AMP synthase-like receptor 1 (393 aa).

3 residues coordinate Mg(2+): Glu-89, Asp-91, and Asp-205. 89–91 is an ATP binding site; that stretch reads EFD. GTP is bound by residues Asp-205 and 251–258; that span reads RASFYEAE. ATP contacts are provided by residues 255 to 258, Lys-276, and 289 to 293; these read YEAE and SYHIK.

Belongs to the mab-21 family. Mg(2+) serves as cofactor. Mn(2+) is required as a cofactor.

The enzyme catalyses GTP + ATP = 3',2'-cGAMP + 2 diphosphate. The catalysed reaction is GTP + ATP = pppA(2'-5')pG + diphosphate. It carries out the reaction pppA(2'-5')pG = 3',2'-cGAMP + diphosphate. With respect to regulation, the enzyme activity is specifically activated by double-stranded RNA (dsRNA). Recognizes long dsRNA (&gt;30 bp) with no preference for 5' RNA phosphorylation. Its function is as follows. Nucleotidyltransferase that catalyzes the formation of cyclic GMP-AMP (3',2'-cGAMP) from ATP and GTP and plays a key role in innate immunity. Synthesizes 3',2'-cGAMP in a two-step reaction through production of the linear intermediate pppA(2'-5')pG. Acts as a key sensor of double-stranded RNA (dsRNA), the presence of dsRNA in the cytoplasm being a danger signal that triggers the immune responses. Directly binds dsRNA longer than 35 bp, activating the nucleotidyltransferase activity, leading to synthesis of 3',2'-cGAMP, a second messenger that binds to and activates Sting, thereby triggering the antiviral immune response via activation of the NF-kappa-B transcription factor Rel (Relish). The chain is Cyclic GMP-AMP synthase-like receptor 1 from Drosophila simulans (Fruit fly).